The following is a 625-amino-acid chain: MRPAQTNQFDYVKIGLASPERIRQWGERTLPNGQVVGEVTKPETINYRTLKPEMDGLFCERIFGPAKDWECHCGKYKRVRHRGIVCERCGVEVTESRVRRHRMGYIKLAAPVAHVWYLKGIPSYISILLDMPLRDVEQIVYFNSYVVLSPGNAETLTYKQLLSEDQWLEIEDQIYSEDSQLQGVEVGIGAEALLRLLADINLEQEAESLREEIGSAKGQKRAKLIKRLRVIDNFIATGSKPEWMVMTVIPVIPPDLRPMVQLDGGRFATSDLNDLYRRVINRNNRLARLQEILAPEIIVRNEKRMLQEAVDALIDNGRRGRTVVGANNRPLKSLSDIIEGKQGRFRQNLLGKRVDYSGRSVIVVGPKLKIHQCGLPREMAIELFQPFVINRLIRSGMVNNIKAAKKLISRNDPSVWDVLEEVIEGHPVMLNRAPTLHRLGIQAFEPILVEGRAIQLHPLVCPAFNADFDGDQMAVHVPLSLESQAEARLLMLASNNILSPATGRPIITPSQDMVLGAYYLTAENPGATKGAGKYFASLDDVIMAFQQEQIDLHAYIYVRFDGEVESDQPDTDPLEVTNNDDGSRTVLYKYRRVREDAQGNLISQYVRTTPGRVIYNKAIQEALAS.

The Zn(2+) site is built by Cys71, Cys73, Cys86, and Cys89. Mg(2+) contacts are provided by Asp467, Asp469, and Asp471.

It belongs to the RNA polymerase beta' chain family. RpoC1 subfamily. In cyanobacteria the RNAP catalytic core is composed of 2 alpha, 1 beta, 1 beta', 1 gamma and 1 omega subunit. When a sigma factor is associated with the core the holoenzyme is formed, which can initiate transcription. Requires Mg(2+) as cofactor. Zn(2+) serves as cofactor.

The catalysed reaction is RNA(n) + a ribonucleoside 5'-triphosphate = RNA(n+1) + diphosphate. Its function is as follows. DNA-dependent RNA polymerase catalyzes the transcription of DNA into RNA using the four ribonucleoside triphosphates as substrates. This is DNA-directed RNA polymerase subunit gamma from Trichormus variabilis (strain ATCC 29413 / PCC 7937) (Anabaena variabilis).